Here is a 133-residue protein sequence, read N- to C-terminus: Small ribosomal subunit protein bS6 (133 aa).

The disordered stretch occupies residues 93–133; sequence KTAVTEPSPMMKEEPRRERRDDSAPRQERAEKKTETTEDNA. Residues 103-133 are compositionally biased toward basic and acidic residues; it reads MKEEPRRERRDDSAPRQERAEKKTETTEDNA.

It belongs to the bacterial ribosomal protein bS6 family.

In terms of biological role, binds together with bS18 to 16S ribosomal RNA. The chain is Small ribosomal subunit protein bS6 from Alteromonas mediterranea (strain DSM 17117 / CIP 110805 / LMG 28347 / Deep ecotype).